The chain runs to 289 residues: MELLCGEVEPVRRAVPDANLLHDDRVLQNLLTIEERYLPQCSYFKCVQKDIQPYMRRMVATWMLEVCEEQKCEEEVFPLAINYLDRFLAGVPTPKTHLQLLGAVCMFLASKLKETIPLTAEKLCIYTDNSIKPQELLEWELVVLGKLKWNLAAVTPHDFIEHILRKLPQPSEKLSLIRKHAQTFIALCATDFKFAMYPPSMIATGSVGAAICGLQQDEDVSSLTGDALVDLLAKITNTDVDCLKACQEQIEVVLLNSLQQYRQDQGDGSKSEDELDQASTPTDVRDIDL.

Residues valine 26 to leucine 151 enclose the Cyclin N-terminal domain. Positions aspartate 264–leucine 289 are disordered. The residue at position 271 (serine 271) is a Phosphoserine. Threonine 280 bears the Phosphothreonine mark.

Belongs to the cyclin family. Cyclin D subfamily. As to quaternary structure, interacts with either CDK4 or CDK6 protein kinase to form a serine/threonine kinase holoenzyme complex. The cyclin subunit imparts substrate specificity to the complex. In terms of processing, phosphorylation at Thr-280 by MAP kinases is required for ubiquitination and degradation by the DCX(AMBRA1) complex. Post-translationally, ubiquitinated by the DCX(AMBRA1) complex during the transition from G1 to S cell phase, leading to its degradation: ubiquitination is dependent on Thr-280 phosphorylation. The DCX(AMBRA1) complex represents the major regulator of CCND2 stability during the G1/S transition. Polyubiquitinated by the SCF(FBXL2) complex, leading to proteasomal degradation.

Its subcellular location is the nucleus. The protein resides in the cytoplasm. It localises to the nucleus membrane. Its function is as follows. Regulatory component of the cyclin D2-CDK4 (DC) complex that phosphorylates and inhibits members of the retinoblastoma (RB) protein family including RB1 and regulates the cell-cycle during G(1)/S transition. Phosphorylation of RB1 allows dissociation of the transcription factor E2F from the RB/E2F complex and the subsequent transcription of E2F target genes which are responsible for the progression through the G(1) phase. Hypophosphorylates RB1 in early G(1) phase. Cyclin D-CDK4 complexes are major integrators of various mitogenenic and antimitogenic signals. The sequence is that of G1/S-specific cyclin-D2 (CCND2) from Bos taurus (Bovine).